The chain runs to 303 residues: Taste receptor type 2 member 13 (303 aa).

The Extracellular portion of the chain corresponds to 1–7; sequence MESALLS. A helical membrane pass occupies residues 8-28; that stretch reads ILTLVIIAEFVIGNLSNGFXV. Residues 29–55 are Cytoplasmic-facing; that stretch reads LINCIDWVSKRQLSSVDKILTFLAISR. A helical membrane pass occupies residues 56–76; it reads IGLIWELLVSWFLGLHYLAIF. The Extracellular portion of the chain corresponds to 77-85; that stretch reads VSGTGLRIM. A helical transmembrane segment spans residues 86–106; the sequence is IFSWVVSNHFSLWLATILSIF. Residues 107–128 lie on the Cytoplasmic side of the membrane; sequence YLLKIASFSSPAFLYLKWRVNQ. Residues 129 to 149 form a helical membrane-spanning segment; sequence VILMILLGTLVFLFLNLIQIN. The Extracellular segment spans residues 150–184; the sequence is IHIKDWLDRCERNTIWNFSMSGLPTFSVPVKFTMT. The N-linked (GlcNAc...) asparagine glycan is linked to Asn-166. Residues 185–205 form a helical membrane-spanning segment; the sequence is MFSLAPFTVALISFLLLIFSL. Topologically, residues 206–232 are cytoplasmic; that stretch reads RKHLQKMQLNYKGHREPRTKAHINALK. A helical membrane pass occupies residues 233–253; it reads IVISFLLLYASFFLCILISWI. Topologically, residues 254-261 are extracellular; sequence SELYQNTL. The helical transmembrane segment at 262–282 threads the bilayer; it reads IHMFCQTIGVFYPSSHSFLLI. Residues 283 to 303 lie on the Cytoplasmic side of the membrane; the sequence is LGNPKLRQASLLVAAKVWAKR.

It belongs to the G-protein coupled receptor T2R family.

The protein localises to the membrane. In terms of biological role, receptor that may play a role in the perception of bitterness and is gustducin-linked. May play a role in sensing the chemical composition of the gastrointestinal content. The activity of this receptor may stimulate alpha gustducin, mediate PLC-beta-2 activation and lead to the gating of TRPM5. In Papio hamadryas (Hamadryas baboon), this protein is Taste receptor type 2 member 13 (TAS2R13).